A 79-amino-acid polypeptide reads, in one-letter code: UPF0291 protein SAV1341 (79 aa).

The disordered stretch occupies residues 56–79 (IDPEGNDVTPEKIKEIQQKRDNKN). Positions 64-79 (TPEKIKEIQQKRDNKN) are enriched in basic and acidic residues.

Belongs to the UPF0291 family.

It is found in the cytoplasm. The chain is UPF0291 protein SAV1341 from Staphylococcus aureus (strain Mu50 / ATCC 700699).